A 1080-amino-acid polypeptide reads, in one-letter code: Carbamoyl phosphate synthase large chain (1080 aa).

The segment at 1–403 (MPKRTDLETI…SLQKALRGLE (403 aa)) is carboxyphosphate synthetic domain. ATP is bound by residues Arg129, Arg169, Gly175, Gly176, Glu208, Val210, Glu215, Gly241, Val242, His243, Gln285, and Glu299. Residues 133–328 (RVAMGEIGLD…IAKVAAKLAV (196 aa)) enclose the ATP-grasp 1 domain. Gln285, Glu299, and Asn301 together coordinate Mg(2+). The Mn(2+) site is built by Gln285, Glu299, and Asn301. The segment at 404-554 (TGKIGLDPTG…YSTYEDECEA (151 aa)) is oligomerization domain. Residues 555–942 (LPTDRDKIMI…AFARAQEAGG (388 aa)) form a carbamoyl phosphate synthetic domain region. Positions 679 to 876 (QQLVDKLGLK…LAKIAARCMA (198 aa)) constitute an ATP-grasp 2 domain. 10 residues coordinate ATP: Arg715, Arg754, Leu756, Glu761, Gly787, Val788, His789, Ser790, Gln830, and Glu847. Gln830, Glu847, and Asn849 together coordinate Mg(2+). Positions 830, 847, and 849 each coordinate Mn(2+). The 138-residue stretch at 943–1080 (IKAPPLGKAF…LQELHKELEA (138 aa)) folds into the MGS-like domain. An allosteric domain region spans residues 943-1080 (IKAPPLGKAF…LQELHKELEA (138 aa)).

This sequence belongs to the CarB family. As to quaternary structure, composed of two chains; the small (or glutamine) chain promotes the hydrolysis of glutamine to ammonia, which is used by the large (or ammonia) chain to synthesize carbamoyl phosphate. Tetramer of heterodimers (alpha,beta)4. It depends on Mg(2+) as a cofactor. Mn(2+) serves as cofactor.

The enzyme catalyses hydrogencarbonate + L-glutamine + 2 ATP + H2O = carbamoyl phosphate + L-glutamate + 2 ADP + phosphate + 2 H(+). The catalysed reaction is hydrogencarbonate + NH4(+) + 2 ATP = carbamoyl phosphate + 2 ADP + phosphate + 2 H(+). It participates in amino-acid biosynthesis; L-arginine biosynthesis; carbamoyl phosphate from bicarbonate: step 1/1. It functions in the pathway pyrimidine metabolism; UMP biosynthesis via de novo pathway; (S)-dihydroorotate from bicarbonate: step 1/3. In terms of biological role, large subunit of the glutamine-dependent carbamoyl phosphate synthetase (CPSase). CPSase catalyzes the formation of carbamoyl phosphate from the ammonia moiety of glutamine, carbonate, and phosphate donated by ATP, constituting the first step of 2 biosynthetic pathways, one leading to arginine and/or urea and the other to pyrimidine nucleotides. The large subunit (synthetase) binds the substrates ammonia (free or transferred from glutamine from the small subunit), hydrogencarbonate and ATP and carries out an ATP-coupled ligase reaction, activating hydrogencarbonate by forming carboxy phosphate which reacts with ammonia to form carbamoyl phosphate. The sequence is that of Carbamoyl phosphate synthase large chain from Xanthomonas axonopodis pv. citri (strain 306).